A 38-amino-acid chain; its full sequence is Photosystem II reaction center protein M (38 aa).

A helical transmembrane segment spans residues 5 to 25; that stretch reads ILGLIATALFIVIPTSFLLIL.

It belongs to the PsbM family. As to quaternary structure, PSII is composed of 1 copy each of membrane proteins PsbA, PsbB, PsbC, PsbD, PsbE, PsbF, PsbH, PsbI, PsbJ, PsbK, PsbL, PsbM, PsbT, PsbX, PsbY, PsbZ, Psb30/Ycf12, at least 3 peripheral proteins of the oxygen-evolving complex and a large number of cofactors. It forms dimeric complexes.

The protein resides in the plastid. Its subcellular location is the cyanelle thylakoid membrane. In terms of biological role, one of the components of the core complex of photosystem II (PSII). PSII is a light-driven water:plastoquinone oxidoreductase that uses light energy to abstract electrons from H(2)O, generating O(2) and a proton gradient subsequently used for ATP formation. It consists of a core antenna complex that captures photons, and an electron transfer chain that converts photonic excitation into a charge separation. This subunit is found at the monomer-monomer interface. The sequence is that of Photosystem II reaction center protein M from Cyanophora paradoxa.